Reading from the N-terminus, the 227-residue chain is ATP-dependent dethiobiotin synthetase BioD (227 aa).

13-18 (DIGKTY) contacts ATP. A Mg(2+)-binding site is contributed by Thr17. Lys38 is an active-site residue. Ser42 provides a ligand contact to substrate. Residues Asp55, 116–119 (EGSG), and 179–180 (NN) each bind ATP. Mg(2+)-binding residues include Asp55 and Glu116.

The protein belongs to the dethiobiotin synthetase family. In terms of assembly, homodimer. Mg(2+) serves as cofactor.

The protein localises to the cytoplasm. The catalysed reaction is (7R,8S)-7,8-diammoniononanoate + CO2 + ATP = (4R,5S)-dethiobiotin + ADP + phosphate + 3 H(+). Its pathway is cofactor biosynthesis; biotin biosynthesis; biotin from 7,8-diaminononanoate: step 1/2. Catalyzes a mechanistically unusual reaction, the ATP-dependent insertion of CO2 between the N7 and N8 nitrogen atoms of 7,8-diaminopelargonic acid (DAPA, also called 7,8-diammoniononanoate) to form a ureido ring. In Clostridium botulinum (strain ATCC 19397 / Type A), this protein is ATP-dependent dethiobiotin synthetase BioD.